Consider the following 393-residue polypeptide: SH3 domain-binding protein 5-like (393 aa).

Disordered regions lie at residues 1-59 (MAEL…LDPR) and 272-332 (HARR…DTDT). Position 13 is a phosphothreonine (Thr-13). Basic and acidic residues predominate over residues 18–28 (LRPEVVEDEVP). Phosphoserine occurs at positions 30 and 49. Coiled coils occupy residues 59–140 (RIQE…YERA) and 169–272 (WQEM…EQIH). Over residues 304–313 (GDSGIEGAEG) the composition is skewed to gly residues. The span at 317-332 (EEGSSLGPGPAPDTDT) shows a compositional bias: low complexity. Ser-343, Ser-350, Ser-358, Ser-362, and Ser-378 each carry phosphoserine. A disordered region spans residues 364–393 (DGQELGTRSGGRRGSDGGVRGGRHQRSVSL). The segment covering 384–393 (GGRHQRSVSL) has biased composition (basic residues).

Belongs to the SH3BP5 family.

Functionally, functions as a guanine nucleotide exchange factor (GEF) for RAB11A. In Pongo abelii (Sumatran orangutan), this protein is SH3 domain-binding protein 5-like (SH3BP5L).